The following is a 419-amino-acid chain: Metacaspase-1 (419 aa).

The segment at 1-109 (MSGYPGYNNG…PPQGMHAFGQ (109 aa)) is disordered. 2 stretches are compositionally biased toward pro residues: residues 18 to 37 (QYPP…PPPQ) and 45 to 61 (QPPP…PPPQ). A compositionally biased stretch (polar residues) spans 83 to 95 (SVNSNAYTNGNQN). Residues histidine 210 and cysteine 266 contribute to the active site.

It belongs to the peptidase C14B family.

Involved in cell death (apoptosis). In Botryotinia fuckeliana (strain B05.10) (Noble rot fungus), this protein is Metacaspase-1 (casA).